The following is a 341-amino-acid chain: HTH-type transcriptional repressor PurR (341 aa).

One can recognise an HTH lacI-type domain in the interval 2 to 56; sequence ATIKDVAKHAGVSTTTVSHVINKTRFVAENTKAAVWAAIKELHYSPSAVARSLKV. Positions 4 to 23 form a DNA-binding region, H-T-H motif; it reads IKDVAKHAGVSTTTVSHVIN. Residues 48–56 mediate DNA binding; the sequence is SAVARSLKV. Positions 73, 190, 192, 221, and 275 each coordinate hypoxanthine.

Homodimer.

The protein operates within purine metabolism; purine nucleotide biosynthesis [regulation]. Its function is as follows. Is the main repressor of the genes involved in the de novo synthesis of purine nucleotides, regulating purB, purC, purEK, purF, purHD, purL, purMN and guaBA expression. PurR is allosterically activated to bind its cognate DNA by binding the purine corepressors, hypoxanthine or guanine, thereby effecting transcription repression. This Yersinia pseudotuberculosis serotype O:1b (strain IP 31758) protein is HTH-type transcriptional repressor PurR.